Reading from the N-terminus, the 502-residue chain is ATP synthase subunit alpha (502 aa).

Residues 115-134 are disordered; the sequence is IDGQGPINTTKTRPVEQKAT. 169–176 is an ATP binding site; sequence GDRQTGKT.

Belongs to the ATPase alpha/beta chains family. In terms of assembly, F-type ATPases have 2 components, CF(1) - the catalytic core - and CF(0) - the membrane proton channel. CF(1) has five subunits: alpha(3), beta(3), gamma(1), delta(1), epsilon(1). CF(0) has three main subunits: a(1), b(2) and c(9-12). The alpha and beta chains form an alternating ring which encloses part of the gamma chain. CF(1) is attached to CF(0) by a central stalk formed by the gamma and epsilon chains, while a peripheral stalk is formed by the delta and b chains.

The protein resides in the cell membrane. It catalyses the reaction ATP + H2O + 4 H(+)(in) = ADP + phosphate + 5 H(+)(out). Functionally, produces ATP from ADP in the presence of a proton gradient across the membrane. The alpha chain is a regulatory subunit. The chain is ATP synthase subunit alpha from Staphylococcus haemolyticus (strain JCSC1435).